The primary structure comprises 1406 residues: Sterol 3-beta-glucosyltransferase (1406 aa).

Positions Ala-83 to Ser-231 are disordered. Residues Gly-110–Ser-128 show a composition bias toward polar residues. Positions Ser-209–Ser-231 are enriched in low complexity. Residues Arg-236–Val-286 form the GRAM 1 domain. Residues Val-286 to Phe-385 enclose the PH domain. 2 disordered regions span residues Ala-457 to Ala-558 and Leu-576 to Pro-622. Residues His-468 to Thr-478 show a composition bias toward basic and acidic residues. 2 stretches are compositionally biased toward polar residues: residues Gly-490–Ala-499 and Ser-531–Trp-548. Residues Leu-576–Gly-587 are compositionally biased toward basic and acidic residues. A GRAM 2 domain is found at Asp-730–Lys-796. 10 residues coordinate UDP-alpha-D-glucose: Ser-917, Arg-918, Asp-920, Ala-1220, His-1222, His-1235, Gly-1239, Thr-1240, Asp-1259, and Gln-1260. The segment at Gln-1334–Arg-1406 is disordered. Over residues Ser-1336 to Ala-1349 the composition is skewed to low complexity. A compositionally biased stretch (acidic residues) spans Gln-1355–Met-1375. Over residues Asp-1376–Ser-1387 the composition is skewed to basic and acidic residues. Over residues Leu-1397–Arg-1406 the composition is skewed to polar residues.

Belongs to the glycosyltransferase 28 family.

The protein resides in the cytoplasm. Its subcellular location is the preautophagosomal structure membrane. The catalysed reaction is a sterol + UDP-alpha-D-glucose = a sterol 3-beta-D-glucoside + UDP + H(+). It catalyses the reaction ergosterol + UDP-alpha-D-glucose = ergosteryl 3-beta-D-glucoside + UDP + H(+). Its function is as follows. Sterol glycosyltransferase responsible for the glycosylation of ergosterol to form ergosterol-glucoside. The chain is Sterol 3-beta-glucosyltransferase from Aspergillus clavatus (strain ATCC 1007 / CBS 513.65 / DSM 816 / NCTC 3887 / NRRL 1 / QM 1276 / 107).